A 92-amino-acid chain; its full sequence is MNKTELINAVAEASELSKKDATKAVDSVFDTILDALKNGDKIQLIGFGNFEVRERSARKGRNPQTGEEIEIPASKVPAFKPGKALKDAVAGK.

Thr4 carries the phosphothreonine modification.

It belongs to the bacterial histone-like protein family. In terms of assembly, homodimer. (Microbial infection) Interacts with Bacillus phage SP01 Gp46; the interaction replaces dsDNA from the hbs-DNA complex.

It is found in the cytoplasm. It localises to the nucleoid. Histone-like DNA-binding protein which introduces negative supercoils in relaxed plasmid DNA in the presence of topoisomerase I. There are at least 20,000 monomers/cell. Capable of wrapping DNA to stabilize it, and thus to prevent its denaturation under extreme environmental conditions. Binds evenly across chromosome, does not display a preference for AT content. Binds ss- and dsDNA in a sequence non-specific manner; 8 nucleotides are sufficient to bind protein. This chain is DNA-binding protein HU 1, found in Bacillus subtilis (strain 168).